An 822-amino-acid chain; its full sequence is Tyrosine-protein kinase Fer (822 aa).

One can recognise an F-BAR domain in the interval 1-259 (MGFGSDLKNS…SVEQIDPSTE (259 aa)). Positions 1–300 (MGFGSDLKNS…QANEIMWNNL (300 aa)) are important for interaction with membranes containing phosphoinositides. Coiled-coil stretches lie at residues 123 to 185 (AEMI…HNQY) and 301 to 390 (TAES…KVQE). A Phosphotyrosine modification is found at Tyr-402. Ser-434 carries the phosphoserine modification. Residues 460 to 550 (WYHGAIPRIE…KSGVVLLNPI (91 aa)) form the SH2 domain. Residues 563 to 816 (VILGELLGKG…FSELQKELTI (254 aa)) enclose the Protein kinase domain. ATP contacts are provided by residues 569–577 (LGKGNFGEV) and Lys-591. Residue Tyr-615 is modified to Phosphotyrosine; by autocatalysis. Catalysis depends on Asp-684, which acts as the Proton acceptor. Tyr-714 is modified (phosphotyrosine; by autocatalysis).

It belongs to the protein kinase superfamily. Tyr protein kinase family. Fes/fps subfamily. Homotrimer. Interacts with ARHGDIA, IRS1, JAK1, NRP1, PIK3R1, PLEC and TMF1. Interacts with PPP1CA and regulates its phosphorylation at 'Thr-320'. Interacts with CTNND1, EGFR, FLT3, PECAM1, PDGFR and STAT3. Interacts (via SH2 domain) with CTTN. Interacts with HSP90; this stabilizes phosphorylated FER and protects FER against proteasomal degradation. Component of a complex that contains at least FER, CTTN and PTK2/FAK1. Autophosphorylated. In terms of processing, polyubiquitinated; this leads to proteasomal degradation. In terms of tissue distribution, isoform 1 is detected in normal colon and in fibroblasts (at protein level). Isoform 3 is detected in normal testis, in colon carcinoma-derived metastases in lung, liver and ovary, and in colon carcinoma and hepato carcinoma cell lines (at protein level). Isoform 3 is not detected in normal colon or in normal fibroblasts (at protein level). Widely expressed.

It localises to the cytoplasm. The protein resides in the cytoskeleton. Its subcellular location is the cell membrane. It is found in the cell projection. The protein localises to the cell junction. It localises to the membrane. The protein resides in the nucleus. Its subcellular location is the cell cortex. It catalyses the reaction L-tyrosyl-[protein] + ATP = O-phospho-L-tyrosyl-[protein] + ADP + H(+). Activated by phosphatidic acid binding. Activated by hydrogen peroxide (in vitro). Activated by reactive oxygen species (ROS). In terms of biological role, tyrosine-protein kinase that acts downstream of cell surface receptors for growth factors and plays a role in the regulation of the actin cytoskeleton, microtubule assembly, lamellipodia formation, cell adhesion, cell migration and chemotaxis. Acts downstream of EGFR, KIT, PDGFRA and PDGFRB. Acts downstream of EGFR to promote activation of NF-kappa-B and cell proliferation. May play a role in the regulation of the mitotic cell cycle. Plays a role in the insulin receptor signaling pathway and in activation of phosphatidylinositol 3-kinase. Acts downstream of the activated FCER1 receptor and plays a role in FCER1 (high affinity immunoglobulin epsilon receptor)-mediated signaling in mast cells. Plays a role in the regulation of mast cell degranulation. Plays a role in leukocyte recruitment and diapedesis in response to bacterial lipopolysaccharide (LPS). Plays a role in synapse organization, trafficking of synaptic vesicles, the generation of excitatory postsynaptic currents and neuron-neuron synaptic transmission. Plays a role in neuronal cell death after brain damage. Phosphorylates CTTN, CTNND1, PTK2/FAK1, GAB1, PECAM1 and PTPN11. May phosphorylate JUP and PTPN1. Can phosphorylate STAT3, but the biological relevance of this depends on cell type and stimulus. The sequence is that of Tyrosine-protein kinase Fer (FER) from Homo sapiens (Human).